We begin with the raw amino-acid sequence, 166 residues long: Small ribosomal subunit protein uS5 (166 aa).

Residues 11–74 (LEDRVVAINR…EDAKKNLVEV (64 aa)) enclose the S5 DRBM domain.

The protein belongs to the universal ribosomal protein uS5 family. As to quaternary structure, part of the 30S ribosomal subunit. Contacts proteins S4 and S8.

In terms of biological role, with S4 and S12 plays an important role in translational accuracy. Located at the back of the 30S subunit body where it stabilizes the conformation of the head with respect to the body. This Enterococcus faecalis (strain ATCC 700802 / V583) protein is Small ribosomal subunit protein uS5.